Reading from the N-terminus, the 712-residue chain is Aryl hydrocarbon receptor nuclear translocator 2 (712 aa).

Positions 36 to 73 are disordered; it reads AGAMPARGGKRRSGMDFDDEDGEGPSKFSRENHSEIER. Residue arginine 42 is modified to Omega-N-methylarginine. Over residues 63 to 73 the composition is skewed to basic and acidic residues; sequence FSRENHSEIER. Residues 63 to 116 enclose the bHLH domain; that stretch reads FSRENHSEIERRRRNKMTQYITELSDMVPTCSALARKPDKLTILRMAVSHMKSM. 2 PAS domains span residues 134 to 209 and 323 to 393; these read TEQE…MTGR and PVCM…VKLK. The region spanning 398-441 is the PAC domain; it reads SVMYRFRTKNREWLLIRTSSFTFQNPYSDEIEYVICTNTNVKQL. A disordered region spans residues 573-712; sequence AWTGSRPPFP…DLGMFPPFSE (140 aa). Low complexity-rich tracts occupy residues 597-626 and 653-675; these read SSHPYPADPSSYSPLSSPAASSPSGNAYPS and SQWQSQHHGQQSGEQHSHQQPGQ.

As to quaternary structure, efficient DNA binding requires dimerization with another bHLH protein. Heterodimer with NPAS4 or SIM1. Heterodimer with the aryl hydrocarbon receptor (AHR) or the SIM1 protein. Interacts with TACC3. In terms of tissue distribution, restricted to adult brain and kidney.

The protein localises to the nucleus. In terms of biological role, transcription factor that plays a role in the development of the hypothalamo-pituitary axis, postnatal brain growth, and visual and renal function. Specifically recognizes the xenobiotic response element (XRE). This Mus musculus (Mouse) protein is Aryl hydrocarbon receptor nuclear translocator 2 (Arnt2).